The primary structure comprises 306 residues: Acetyl-coenzyme A carboxylase carboxyl transferase subunit beta (306 aa).

Residues 25-294 (LWIKDPTSGE…VVNPSNTSST (270 aa)) enclose the CoA carboxyltransferase N-terminal domain. Low complexity predominate over residues 287–296 (NPSNTSSTNS). Residues 287–306 (NPSNTSSTNSQASLSKAEAA) form a disordered region.

It belongs to the AccD/PCCB family. As to quaternary structure, acetyl-CoA carboxylase is a heterohexamer composed of biotin carboxyl carrier protein (AccB), biotin carboxylase (AccC) and two subunits each of ACCase subunit alpha (AccA) and ACCase subunit beta (AccD).

The protein resides in the cytoplasm. It carries out the reaction N(6)-carboxybiotinyl-L-lysyl-[protein] + acetyl-CoA = N(6)-biotinyl-L-lysyl-[protein] + malonyl-CoA. Its pathway is lipid metabolism; malonyl-CoA biosynthesis; malonyl-CoA from acetyl-CoA: step 1/1. Functionally, component of the acetyl coenzyme A carboxylase (ACC) complex. Biotin carboxylase (BC) catalyzes the carboxylation of biotin on its carrier protein (BCCP) and then the CO(2) group is transferred by the transcarboxylase to acetyl-CoA to form malonyl-CoA. This is Acetyl-coenzyme A carboxylase carboxyl transferase subunit beta from Bartonella henselae (strain ATCC 49882 / DSM 28221 / CCUG 30454 / Houston 1) (Rochalimaea henselae).